Reading from the N-terminus, the 378-residue chain is Erythronate-4-phosphate dehydrogenase (378 aa).

2 residues coordinate substrate: Ser45 and Thr66. Asp146 and Thr175 together coordinate NAD(+). Arg208 is a catalytic residue. Position 232 (Asp232) interacts with NAD(+). The active site involves Glu237. Residue His254 is the Proton donor of the active site. Gly257 provides a ligand contact to NAD(+). Position 258 (Tyr258) interacts with substrate.

Belongs to the D-isomer specific 2-hydroxyacid dehydrogenase family. PdxB subfamily. In terms of assembly, homodimer.

It localises to the cytoplasm. It catalyses the reaction 4-phospho-D-erythronate + NAD(+) = (R)-3-hydroxy-2-oxo-4-phosphooxybutanoate + NADH + H(+). The protein operates within cofactor biosynthesis; pyridoxine 5'-phosphate biosynthesis; pyridoxine 5'-phosphate from D-erythrose 4-phosphate: step 2/5. Catalyzes the oxidation of erythronate-4-phosphate to 3-hydroxy-2-oxo-4-phosphonooxybutanoate. This chain is Erythronate-4-phosphate dehydrogenase, found in Salmonella paratyphi A (strain ATCC 9150 / SARB42).